Consider the following 464-residue polypeptide: Sulfoacetaldehyde dehydrogenase (acylating) (464 aa).

Catalysis depends on Cys-241, which acts as the Nucleophile.

The protein belongs to the aldehyde dehydrogenase family.

It catalyses the reaction sulfoacetaldehyde + NADP(+) + CoA = sulfoacetyl-CoA + NADPH + H(+). Its function is as follows. Involved in the degradation of sulfoacetate. Catalyzes the conversion of sulfoacetyl-CoA and NADPH to sulfoacetaldehyde, CoA and NADP(+). A much lower level of activity (1%) is observed when NADP(+) is replaced with NAD(+). This Bilophila wadsworthia (strain 3_1_6) protein is Sulfoacetaldehyde dehydrogenase (acylating).